Consider the following 686-residue polypeptide: MAIDRRREAAGGGPGRQPAPAEENGSLPPGDAAASAPLGGRAGPGGGAEIQPLPPLHPGGGPHPSCCSAAAAPSLLLLDYDGSVLPFLGGLGGGYQKTLVLLTWIPALFIGFSQFSDSFLLDQPNFWCRGAGKGTELAGVTTTGRGGDMGNWTSLPTTPFATAPWEAAGNRSNSSGADGGDTPPLPSPPDKGDNASNCDCRAWDYGIRAGLVQNVVSKWDLVCDNAWKVHIAKFSLLVGLIFGYLITGCIADWVGRRPVLLFSIIFILIFGLTVALSVNVTMFSTLRFFEGFCLAGIILTLYALRIELCPPGKRFMITMVASFVAMAGQFLMPGLAALCRDWQVLQALIICPFLLMLLYWSIFPESLRWLMATQQFESAKRLILHFTQKNRMNPEGDIKGVIPELEKELSRRPKKVCIVKVVGTRNLWKNIVVLCVNSLTGYGIHHCFARSMMGHEVKVPLLENFYADYYTTASIALVSCLAMCVVVRFLGRRGGLLLFMILTALASLLQLGLLNLIGKYSQHPDSGMSDSVKDKFSIAFSIVGMFASHAVGSLSVFFCAEITPTVIRCGGLGLVLASAGFGMLTAPIIELHNQKGYFLHHIIFACCTLICIICILLLPESRDQNLPENISNGEHYTRQPLLPHKKGEQPLLLTNAELKDYSGLHDAAAAGDTLPEGATANGMKAM.

2 disordered regions span residues 1 to 62 (MAID…GGGP) and 169 to 193 (GNRS…DKGD). Residue Asn24 is glycosylated (N-linked (GlcNAc...) asparagine). 2 consecutive transmembrane segments (helical) span residues 234–254 (FSLL…ADWV) and 258–278 (PVLL…ALSV). An N-linked (GlcNAc...) asparagine glycan is attached at Asn279. Helical transmembrane passes span 288 to 308 (FFEG…RIEL), 315 to 335 (FMIT…MPGL), 344 to 364 (VLQA…SIFP), 467 to 487 (ADYY…CVVV), 494 to 514 (GGLL…LGLL), 538 to 558 (IAFS…SVFF), 569 to 589 (CGGL…APII), and 598 to 618 (FLHH…ILLL).

Belongs to the major facilitator (TC 2.A.1) superfamily. Organic cation transporter (TC 2.A.1.19) family.

The protein resides in the membrane. This is Solute carrier family 22 member 23 (SLC22A23) from Homo sapiens (Human).